Here is a 387-residue protein sequence, read N- to C-terminus: Galactokinase (387 aa).

36-39 (EHTD) contributes to the substrate binding site. ATP-binding positions include Ser70 and 125-131 (GAGLSSS). Mg(2+) contacts are provided by Ser131 and Glu163. Asp175 functions as the Proton acceptor in the catalytic mechanism. Position 227 (Tyr227) interacts with substrate.

It belongs to the GHMP kinase family. GalK subfamily.

Its subcellular location is the cytoplasm. The enzyme catalyses alpha-D-galactose + ATP = alpha-D-galactose 1-phosphate + ADP + H(+). Its pathway is carbohydrate metabolism; galactose metabolism. Functionally, catalyzes the transfer of the gamma-phosphate of ATP to D-galactose to form alpha-D-galactose-1-phosphate (Gal-1-P). The protein is Galactokinase of Streptomyces coelicolor (strain ATCC BAA-471 / A3(2) / M145).